We begin with the raw amino-acid sequence, 326 residues long: DNA-directed RNA polymerase subunit alpha (326 aa).

Residues 1–232 (MQGSARNFLK…EQLSSFVELE (232 aa)) form an alpha N-terminal domain (alpha-NTD) region. The interval 246–326 (FDPQLLAAVD…NWPPVDLMSE (81 aa)) is alpha C-terminal domain (alpha-CTD).

Belongs to the RNA polymerase alpha chain family. As to quaternary structure, homodimer. The RNAP catalytic core consists of 2 alpha, 1 beta, 1 beta' and 1 omega subunit. When a sigma factor is associated with the core the holoenzyme is formed, which can initiate transcription.

It catalyses the reaction RNA(n) + a ribonucleoside 5'-triphosphate = RNA(n+1) + diphosphate. Its function is as follows. DNA-dependent RNA polymerase catalyzes the transcription of DNA into RNA using the four ribonucleoside triphosphates as substrates. The protein is DNA-directed RNA polymerase subunit alpha of Ruthia magnifica subsp. Calyptogena magnifica.